We begin with the raw amino-acid sequence, 226 residues long: PKHD-type hydroxylase PFL_0865 (226 aa).

The Fe2OG dioxygenase domain maps to 78 to 178 (KVFPPLINCY…RYASFFWTQS (101 aa)). 3 residues coordinate Fe cation: H96, D98, and H159. R169 contributes to the 2-oxoglutarate binding site.

It depends on Fe(2+) as a cofactor. L-ascorbate is required as a cofactor.

This chain is PKHD-type hydroxylase PFL_0865, found in Pseudomonas fluorescens (strain ATCC BAA-477 / NRRL B-23932 / Pf-5).